The following is a 245-amino-acid chain: Thiopurine S-methyltransferase (245 aa).

Serine 14 carries the phosphoserine modification. An S-adenosyl-L-methionine-binding site is contributed by 29 to 40; it reads WQDKWVNGNTAF. Position 40 (phenylalanine 40) interacts with substrate. Lysine 58 is subject to N6-acetyllysine. S-adenosyl-L-methionine is bound by residues leucine 69, glutamate 90, 134–135, and arginine 152; that span reads SI.

The protein belongs to the class I-like SAM-binding methyltransferase superfamily. TPMT family. Monomer.

Its subcellular location is the cytoplasm. It carries out the reaction S-adenosyl-L-methionine + a thiopurine = S-adenosyl-L-homocysteine + a thiopurine S-methylether.. This Pongo pygmaeus (Bornean orangutan) protein is Thiopurine S-methyltransferase (TPMT).